The primary structure comprises 176 residues: Translation initiation factor IF-3 (176 aa).

Belongs to the IF-3 family. Monomer.

It localises to the cytoplasm. In terms of biological role, IF-3 binds to the 30S ribosomal subunit and shifts the equilibrium between 70S ribosomes and their 50S and 30S subunits in favor of the free subunits, thus enhancing the availability of 30S subunits on which protein synthesis initiation begins. This is Translation initiation factor IF-3 from Wolinella succinogenes (strain ATCC 29543 / DSM 1740 / CCUG 13145 / JCM 31913 / LMG 7466 / NCTC 11488 / FDC 602W) (Vibrio succinogenes).